A 592-amino-acid chain; its full sequence is V-type ATP synthase alpha chain 2 (592 aa).

237 to 244 (GGFGTGKT) contacts ATP.

Belongs to the ATPase alpha/beta chains family.

It catalyses the reaction ATP + H2O + 4 H(+)(in) = ADP + phosphate + 5 H(+)(out). In terms of biological role, produces ATP from ADP in the presence of a proton gradient across the membrane. The V-type alpha chain is a catalytic subunit. This Clostridium tetani (strain Massachusetts / E88) protein is V-type ATP synthase alpha chain 2.